Consider the following 162-residue polypeptide: Universal stress protein MJ0577 (162 aa).

ATP-binding positions include Pro11, Val41, 127 to 133, and 141 to 143; these read GSHGKTN and SVT.

Belongs to the universal stress protein A family. Homodimer. The cofactor is Mn(2+).

Its subcellular location is the cytoplasm. The polypeptide is Universal stress protein MJ0577 (Methanocaldococcus jannaschii (strain ATCC 43067 / DSM 2661 / JAL-1 / JCM 10045 / NBRC 100440) (Methanococcus jannaschii)).